The chain runs to 102 residues: MYAVIKTGGKQYKVAEGEFLKVEKLVGEVGDSVEFGEVLMIGGEKIVVGAPHVAGATVTAKIAVQGKDKKILVFKSKRRKGTRKLRGHRQHKTVLKIEKISA.

Belongs to the bacterial ribosomal protein bL21 family. Part of the 50S ribosomal subunit. Contacts protein L20.

In terms of biological role, this protein binds to 23S rRNA in the presence of protein L20. The polypeptide is Large ribosomal subunit protein bL21 (Pelobacter propionicus (strain DSM 2379 / NBRC 103807 / OttBd1)).